Consider the following 450-residue polypeptide: Glucose-6-phosphate isomerase (450 aa).

Position 39 is a phosphothreonine (T39). The Proton donor role is filled by E291. Catalysis depends on residues H312 and K426.

The protein belongs to the GPI family.

The protein resides in the cytoplasm. The enzyme catalyses alpha-D-glucose 6-phosphate = beta-D-fructose 6-phosphate. The protein operates within carbohydrate biosynthesis; gluconeogenesis. It participates in carbohydrate degradation; glycolysis; D-glyceraldehyde 3-phosphate and glycerone phosphate from D-glucose: step 2/4. Its function is as follows. Catalyzes the reversible isomerization of glucose-6-phosphate to fructose-6-phosphate. The chain is Glucose-6-phosphate isomerase from Bacillus mycoides (strain KBAB4) (Bacillus weihenstephanensis).